Reading from the N-terminus, the 328-residue chain is Phosphate acyltransferase (328 aa).

Belongs to the PlsX family. In terms of assembly, homodimer. Probably interacts with PlsY.

Its subcellular location is the cytoplasm. The catalysed reaction is a fatty acyl-[ACP] + phosphate = an acyl phosphate + holo-[ACP]. Its pathway is lipid metabolism; phospholipid metabolism. Its function is as follows. Catalyzes the reversible formation of acyl-phosphate (acyl-PO(4)) from acyl-[acyl-carrier-protein] (acyl-ACP). This enzyme utilizes acyl-ACP as fatty acyl donor, but not acyl-CoA. This is Phosphate acyltransferase from Staphylococcus haemolyticus (strain JCSC1435).